The following is a 93-amino-acid chain: MTKGNYSYPLDPSWSTEEITTVLHFLSQVEKAYESKVDRDQLLEAYKAFKTVVPGKASEKQLDKAFQEASGFSTYQAVRAAKAKEKGFVTLGK.

Belongs to the UPF0223 family.

This chain is UPF0223 protein str0998, found in Streptococcus thermophilus (strain CNRZ 1066).